The chain runs to 411 residues: Translation initiation factor 2 subunit gamma (411 aa).

Residues 9–203 (QAEVNIGMVG…AIEDFIPTPK (195 aa)) enclose the tr-type G domain. The segment at 18-25 (GHVDHGKT) is G1. Mg(2+)-binding residues include aspartate 21, threonine 25, glycine 46, and threonine 48. 21 to 26 (DHGKTT) provides a ligand contact to GTP. The interval 46-50 (GITIK) is G2. Residues cysteine 61, cysteine 64, cysteine 73, and cysteine 76 each coordinate Zn(2+). The tract at residues 90–93 (DAPG) is G3. Residues 146–149 (NKIE) and 181–183 (SAL) contribute to the GTP site. The segment at 146-149 (NKIE) is G4. The tract at residues 181–183 (SAL) is G5.

The protein belongs to the TRAFAC class translation factor GTPase superfamily. Classic translation factor GTPase family. EIF2G subfamily. In terms of assembly, heterotrimer composed of an alpha, a beta and a gamma chain. It depends on Mg(2+) as a cofactor.

It carries out the reaction GTP + H2O = GDP + phosphate + H(+). Its function is as follows. eIF-2 functions in the early steps of protein synthesis by forming a ternary complex with GTP and initiator tRNA. The chain is Translation initiation factor 2 subunit gamma from Pyrococcus abyssi (strain GE5 / Orsay).